Here is a 737-residue protein sequence, read N- to C-terminus: MLIRRRALWLTIPILIIMTSHKIMCAFDLSHVHSESCLKIQDISSDTINFTPNLVMFRFFSNETHSDVFHLPKCIFDSKLTSYLFDHLNIYEDVSVYKNNFEKYYMGSVEGTYRTIIIKGEDTTPYLDKTTAPTVEITEKDLIITYQGIRYMNPFPVLSLIDDESCEVFDDINELILPYFGKCRKFYLNFGSVTLFGHITSNFVTIKYTAQNGTDPYTIRLFFGNSAEIVHTLPFEAQDLALRMMMYDDFEIIGEVGPVKEMLKSFKLSLLDSLLEQNHEDVMNDFRHVFEAFYNHIKKIRDGSIDIKSLHIEQLLDSLLAYSIGYYIQYRYPPYTGKWRGIEHFIETETYIHMVPELFDLFAHNMTVKTPTRPNAIKFINILIRLYSYTDYTKLDHRGLSLYFLKYIYQGNVTDDIATYAHRYMTNLYTKYTYPKTQEGEHLYKSYNDSLDTFILNTIGLKSKNKTLLHHILLLQTGMCNIQNMIGHFHSLQNNDPKFGALLSPCYRSLRYDLTAKKIGQLITKESLEPYGRLVNMVRFMTKNSSMLNVLKCELPEDDGLLAIATVDNKTYIISSRPIAVGVVYKATYTAINLFLYVTRIQNNTCIHIDKVYRDGDVKAVYTFSLDTAKDCGDMCPSVLVEYQTNTGFIGIHVINSIADIQYISENRKLFPESSHYLWLLKNDTVLELEGTNFFLFSSKSPGAIVLYIIIISLIVWTLYEIIKLFCYKRQWQYQKL.

The signal sequence occupies residues 1-25 (MLIRRRALWLTIPILIIMTSHKIMC). The Virion surface portion of the chain corresponds to 26-702 (AFDLSHVHSE…NFFLFSSKSP (677 aa)). Residues Asn-62, Asn-212, Asn-365, Asn-412, Asn-448, Asn-465, Asn-544, Asn-569, Asn-603, and Asn-683 are each glycosylated (N-linked (GlcNAc...) asparagine; by host). Positions 191–253 (GSVTLFGHIT…MMMYDDFEII (63 aa)) are interaction with gL. A helical transmembrane segment spans residues 703 to 723 (GAIVLYIIIISLIVWTLYEII). Over 724 to 737 (KLFCYKRQWQYQKL) the chain is Intravirion.

The protein belongs to the herpesviridae glycoprotein H family. Interacts with glycoprotein L (gL); this interaction is necessary for the correct processing and cell surface expression of gH. The heterodimer gH/gL seems to interact with gB trimers during fusion. In terms of processing, N-glycosylated, O-glycosylated, and sialylated.

The protein resides in the virion membrane. The protein localises to the host cell membrane. Its subcellular location is the host endosome membrane. In terms of biological role, the heterodimer glycoprotein H-glycoprotein L is required for the fusion of viral and plasma membranes leading to virus entry into the host cell. Following initial binding to host receptor, membrane fusion is mediated by the fusion machinery composed of gB and the heterodimer gH/gL. May also be involved in the fusion between the virion envelope and the outer nuclear membrane during virion morphogenesis. The sequence is that of Envelope glycoprotein H from Elephantid herpesvirus 1 (isolate Asian elephant/Berlin/Kiba/1998) (EIHV-1).